The following is a 166-amino-acid chain: Peroxynitrite isomerase Rv2717c (166 aa).

A GXWXGXG motif is present at residues 28–34 (GTWRGQG). Residues Thr40 and His158 each coordinate heme b.

The protein belongs to the nitrobindin family. In terms of assembly, homodimer. Heme b serves as cofactor.

It is found in the cytoplasm. It catalyses the reaction peroxynitrite = nitrate. It functions in the pathway nitrogen metabolism. Heme-binding protein able to scavenge peroxynitrite and to protect free L-tyrosine against peroxynitrite-mediated nitration, by acting as a peroxynitrite isomerase that converts peroxynitrite to nitrate. Therefore, this protein likely plays a role in peroxynitrite sensing and in the detoxification of reactive nitrogen and oxygen species (RNS and ROS, respectively). Is able to bind nitric oxide (NO) in vitro, but may act as a sensor of peroxynitrite levels in vivo. This chain is Peroxynitrite isomerase Rv2717c, found in Arabidopsis thaliana (Mouse-ear cress).